The primary structure comprises 299 residues: Acetaldehyde dehydrogenase (299 aa).

11 to 14 serves as a coordination point for NAD(+); it reads SGNI. Cysteine 126 functions as the Acyl-thioester intermediate in the catalytic mechanism. NAD(+) contacts are provided by residues 157–165 and asparagine 267; that span reads SAGPGTRAN.

The protein belongs to the acetaldehyde dehydrogenase family.

The catalysed reaction is acetaldehyde + NAD(+) + CoA = acetyl-CoA + NADH + H(+). The polypeptide is Acetaldehyde dehydrogenase (Bacillus cereus (strain ATCC 10987 / NRS 248)).